The chain runs to 460 residues: T-box transcription factor TBX1 (460 aa).

Disordered stretches follow at residues 30–53 (LNTP…ESQF) and 67–99 (GSNS…TLVK). The span at 67-84 (GSNSAQAPAQGDSGTSNC) shows a compositional bias: polar residues. The segment at residues 116 to 294 (LWDEFNQLGT…SNPFAKGFRD (179 aa)) is a DNA-binding region (T-box). Disordered stretches follow at residues 317-355 (RTRN…DPTH) and 376-400 (PLTA…PDTL). The segment covering 320-330 (NPMSSPPQQNG) has biased composition (polar residues). Positions 331–344 (TEKEDSRREYDRDP) are enriched in basic and acidic residues. The Nuclear localization signal motif lies at 418–429 (KTRPSPYPSPSI).

In terms of assembly, binds DNA as a dimer. Expressed in the ear and mesendodermal components of pharyngeal arches.

Its subcellular location is the nucleus. Probable transcriptional regulator involved in developmental processes. Binds to the palindromic T site 5'-TTCACACCTAGGTGTGAA-3' DNA sequence. Is required for normal development of the pharyngeal arch arteries. Acts cell autonomously in the pharyngeal mesendoderm and influences the development of neural crest-derived cartilages secondarily. This chain is T-box transcription factor TBX1 (tbx1), found in Danio rerio (Zebrafish).